A 129-amino-acid polypeptide reads, in one-letter code: UPF0225 protein XC_4246 (129 aa).

The protein belongs to the UPF0225 family.

The sequence is that of UPF0225 protein XC_4246 from Xanthomonas campestris pv. campestris (strain 8004).